We begin with the raw amino-acid sequence, 198 residues long: Transcription factor LBX2 (198 aa).

3 disordered regions span residues 24–46 (MVPRAPSAPQLPESGPGPTSPLC), 63–89 (ALQPSEGRAGPDALGPGPFGRKRRKSR), and 173–198 (DPGLCLGPAGPDSRPHLSDEEIQVDD). The segment at residues 85 to 144 (RRKSRTAFTAQQVLELERRFVFQKYLAPSERDGLATRLGLANAQVVTWFQNRRAKLKRDV) is a DNA-binding region (homeobox).

It is found in the nucleus. Functionally, transcription factor. The polypeptide is Transcription factor LBX2 (LBX2) (Homo sapiens (Human)).